A 316-amino-acid chain; its full sequence is Prenytransferase adrG (316 aa).

Transmembrane regions (helical) follow at residues 36–56 (LLGF…CASI), 60–80 (KIPI…SIFL), 131–151 (VLIY…FFAL), 163–183 (PQIT…SLGL), 191–211 (PTVC…VIYS), 247–267 (GFLA…VVSV), and 294–314 (KSAF…EYCL).

Belongs to the UbiA prenyltransferase family. It depends on Mg(2+) as a cofactor.

It localises to the membrane. The catalysed reaction is 3,5-dimethylorsellinate + (2E,6E)-farnesyl diphosphate = (3R)-3-farnesyl-6-hydroxy-2,3,5-trimethyl-4-oxocyclohexa-1,5-diene-1-carboxylate + diphosphate + H(+). It participates in secondary metabolite biosynthesis; terpenoid biosynthesis. Its function is as follows. Prenytransferase; part of the gene cluster that mediates the biosynthesis of andrastins, meroterpenoid compounds that exhibit inhibitory activity against ras farnesyltransferase, suggesting that they could be promising leads for antitumor agents. The first step of the pathway is the synthesis of 3,5-dimethylorsellinic acid (DMOA) by the polyketide synthase adrD via condensation of one acetyl-CoA starter unit with 3 malonyl-CoA units and 2 methylations. DMAO is then converted to farnesyl-DMAO by the prenyltransferase adrG. The methyltransferase adrK catalyzes the methylation of the carboxyl group of farnesyl-DMAO to farnesyl-DMAO methyl ester which is further converted to epoxyfarnesyl-DMAO methyl ester by the FAD-dependent monooxygenase adrH. The terpene cyclase adrI then catalyzes the carbon skeletal rearrangement to generate the andrastin E, the first compound in the pathway having the andrastin scaffold, with the tetracyclic ring system. The post-cyclization tailoring enzymes adrF, adrE, adrJ, and adrA, are involved in the conversion of andrastin E into andrastin A. The short chain dehydrogenase adrF is responsible for the oxidation of the C-3 a hydroxyl group of andrastin E to yield the corresponding ketone, andrastin D. The ketoreductase adrE stereoselectively reduces the carbonyl moiety to reverse the stereochemistry of the C-3 position to yield andrastin F. The acetyltransferase adrJ is the acetyltransferase that attaches the acetyl group to the C-3 hydroxyl group of andrastin F to yield andrastin C. Finally, the cytochrome P450 monooxygenase adrA catalyzes two sequential oxidation reactions of the C-23 methyl group, to generate the corresponding alcohol andrastin B, and aldehyde andrastin A. The protein is Prenytransferase adrG of Penicillium roqueforti.